We begin with the raw amino-acid sequence, 244 residues long: 3-deoxy-manno-octulosonate cytidylyltransferase (244 aa).

The protein belongs to the KdsB family.

The protein localises to the cytoplasm. It catalyses the reaction 3-deoxy-alpha-D-manno-oct-2-ulosonate + CTP = CMP-3-deoxy-beta-D-manno-octulosonate + diphosphate. The protein operates within nucleotide-sugar biosynthesis; CMP-3-deoxy-D-manno-octulosonate biosynthesis; CMP-3-deoxy-D-manno-octulosonate from 3-deoxy-D-manno-octulosonate and CTP: step 1/1. It functions in the pathway bacterial outer membrane biogenesis; lipopolysaccharide biosynthesis. Its function is as follows. Activates KDO (a required 8-carbon sugar) for incorporation into bacterial lipopolysaccharide in Gram-negative bacteria. The sequence is that of 3-deoxy-manno-octulosonate cytidylyltransferase from Anaeromyxobacter sp. (strain Fw109-5).